A 365-amino-acid chain; its full sequence is Selina-4(15),7(11)-diene synthase ((2E,6E)-farnesyl diphosphate cyclizing) (365 aa).

Mg(2+)-binding residues include Asp-82 and Glu-87. Residues 82-87 carry the DDXXXE motif motif; the sequence is DDGHCE. Arg-178 is a binding site for substrate. Asn-224 and Ser-228 together coordinate Mg(2+). Lys-231 contacts substrate. Glu-232 contributes to the Mg(2+) binding site. 310-311 provides a ligand contact to substrate; that stretch reads RY.

It belongs to the terpene synthase family. In terms of assembly, monomer. It depends on Mg(2+) as a cofactor.

The catalysed reaction is (2E,6E)-farnesyl diphosphate = selina-4(15),7(11)-diene + diphosphate. It participates in secondary metabolite biosynthesis; terpenoid biosynthesis. Functionally, catalyzes the conversion of (2E,6E)-farnesyl diphosphate (FPP) to yield the bicyclic sesquiterpene selina-4(15),7(11)-diene via a 1,10-cyclization, which requires the abstraction of the pyrophosphate from FPP leading to a (E,E)-germacradienyl cation. The only accepted substrate is (2E,6E)-farnesyl diphosphate (FPP). This is Selina-4(15),7(11)-diene synthase ((2E,6E)-farnesyl diphosphate cyclizing) from Streptomyces pristinaespiralis (strain ATCC 25486 / DSM 40338 / CBS 914.69 / JCM 4507 / KCC S-0507 / NBRC 13074 / NRRL 2958 / 5647).